The sequence spans 251 residues: Coproheme decarboxylase (251 aa).

Residues R133, 147 to 151, H174, Q187, and S225 each bind Fe-coproporphyrin III; that span reads YPMSK. Residue Y147 is part of the active site.

This sequence belongs to the ChdC family. Type 1 subfamily. In terms of assembly, homopentamer. Homohexamer in solution. Requires Fe-coproporphyrin III as cofactor.

The catalysed reaction is Fe-coproporphyrin III + 2 H2O2 + 2 H(+) = heme b + 2 CO2 + 4 H2O. It catalyses the reaction Fe-coproporphyrin III + H2O2 + H(+) = harderoheme III + CO2 + 2 H2O. The enzyme catalyses harderoheme III + H2O2 + H(+) = heme b + CO2 + 2 H2O. It participates in porphyrin-containing compound metabolism; protoheme biosynthesis. Its function is as follows. Involved in coproporphyrin-dependent heme b biosynthesis. Catalyzes the decarboxylation of Fe-coproporphyrin III (coproheme) to heme b (protoheme IX), the last step of the pathway. The reaction occurs in a stepwise manner with a three-propionate intermediate. In Listeria monocytogenes serovar 1/2a (strain ATCC BAA-679 / EGD-e), this protein is Coproheme decarboxylase.